The primary structure comprises 249 residues: Proteasome subunit alpha type-3 (249 aa).

It belongs to the peptidase T1A family. The 26S proteasome consists of a 20S proteasome core and two 19S regulatory subunits. The 20S proteasome core is composed of 28 subunits that are arranged in four stacked rings, resulting in a barrel-shaped structure. The two end rings are each formed by seven alpha subunits, and the two central rings are each formed by seven beta subunits. The catalytic chamber with the active sites is on the inside of the barrel.

It is found in the cytoplasm. It localises to the nucleus. The proteasome is a multicatalytic proteinase complex which is characterized by its ability to cleave peptides with Arg, Phe, Tyr, Leu, and Glu adjacent to the leaving group at neutral or slightly basic pH. The proteasome has an ATP-dependent proteolytic activity. The chain is Proteasome subunit alpha type-3 (PAG1) from Spinacia oleracea (Spinach).